The primary structure comprises 238 residues: IkB-like protein (238 aa).

ANK repeat units follow at residues 48–80, 87–118, 124–153, and 158–187; these read GSSV…IINH, GNSA…TRIC, GMTP…PTQK, and GFTA…PLYM. Positions 80-86 match the Nuclear localization signal motif; the sequence is HHRRDND. Residues 202–213 carry the Nuclear localization signal motif; it reads KKKPKIIITGCK. Residues 205 to 212 carry the PxIxITxC motif; Interaction with host PPP3CA motif; it reads PKIIITGC. An FLCV motif motif is present at residues 227–230; the sequence is FLCV.

The protein belongs to the asfivirus A238L family. In terms of assembly, interacts with host PPIA. Interacts with host PPP3CA/Calcineurin. Interacts with host RELA/p65; interaction of the 32 kDa form with host RELA results in the formation of a stable complex with NF-kappa-B. Interacts with host PPP3R1. Interacts with host EP300; this interaction inhibits the association of host EP300 with host RELA, JUN and NFATC2. In terms of processing, the protein exists in a 28 kDa and a 32 kDa form, probably due to post-translational modifications which are neither phosphorylation, nor sumoylation.

It localises to the host nucleus. The protein resides in the host cytoplasm. In terms of biological role, ikB-like protein that inhibits the binding of NF-kappa-B to DNA, thereby downregulating pro-inflammatory cytokine production. Forms a heterodimer with the NF-kappa-B subunit RELA/p65 and prevents the activation of the NF-kappa-B transcription factor. Inhibits calcineurin function, which is required for the induction of nuclear factor of activated T cells (NFAT)-dependent immune response genes. Prevents the binding of substrates to calcineurin without affecting the phosphatase activity. Does not contain the serine residues that are phosphorylated by host IkB kinase and thus is not degraded following stimulation of the NFkB pathway. In Ornithodoros (relapsing fever ticks), this protein is IkB-like protein (A238L).